The primary structure comprises 172 residues: Cytochrome b6-f complex iron-sulfur subunit (172 aa).

A helical transmembrane segment spans residues 17 to 39 (VFLNALLSSSVGVVVVGTLYPVV). Residues 61–161 (GKPISVSELL…ATVDGDNVRF (101 aa)) form the Rieske domain. [2Fe-2S] cluster is bound by residues C107, H109, C125, and H128. A disulfide bridge links C112 with C127.

It belongs to the Rieske iron-sulfur protein family. As to quaternary structure, the 4 large subunits of the cytochrome b6-f complex are cytochrome b6, subunit IV (17 kDa polypeptide, PetD), cytochrome f and the Rieske protein, while the 4 small subunits are PetG, PetL, PetM and PetN. The complex functions as a dimer. It depends on [2Fe-2S] cluster as a cofactor.

The protein resides in the cellular thylakoid membrane. The catalysed reaction is 2 oxidized [plastocyanin] + a plastoquinol + 2 H(+)(in) = 2 reduced [plastocyanin] + a plastoquinone + 4 H(+)(out). Component of the cytochrome b6-f complex, which mediates electron transfer between photosystem II (PSII) and photosystem I (PSI), cyclic electron flow around PSI, and state transitions. This chain is Cytochrome b6-f complex iron-sulfur subunit, found in Synechococcus sp. (strain JA-3-3Ab) (Cyanobacteria bacterium Yellowstone A-Prime).